We begin with the raw amino-acid sequence, 139 residues long: Peptide methionine sulfoxide reductase MsrB (139 aa).

The region spanning 8-130 (EREWQRELSP…NSASLQLKTD (123 aa)) is the MsrB domain. Residues Cys47, Cys50, Cys96, and Cys99 each contribute to the Zn(2+) site. Catalysis depends on Cys119, which acts as the Nucleophile.

This sequence belongs to the MsrB Met sulfoxide reductase family. Zn(2+) is required as a cofactor.

The enzyme catalyses L-methionyl-[protein] + [thioredoxin]-disulfide + H2O = L-methionyl-(R)-S-oxide-[protein] + [thioredoxin]-dithiol. The polypeptide is Peptide methionine sulfoxide reductase MsrB (Acinetobacter baylyi (strain ATCC 33305 / BD413 / ADP1)).